The chain runs to 295 residues: Acetylglutamate kinase (295 aa).

Residues Gly-66–Gly-67, Arg-88, and Asn-193 each bind substrate.

The protein belongs to the acetylglutamate kinase family. ArgB subfamily.

The protein localises to the cytoplasm. It catalyses the reaction N-acetyl-L-glutamate + ATP = N-acetyl-L-glutamyl 5-phosphate + ADP. The protein operates within amino-acid biosynthesis; L-arginine biosynthesis; N(2)-acetyl-L-ornithine from L-glutamate: step 2/4. Catalyzes the ATP-dependent phosphorylation of N-acetyl-L-glutamate. The chain is Acetylglutamate kinase from Rhizobium rhizogenes (strain K84 / ATCC BAA-868) (Agrobacterium radiobacter).